Reading from the N-terminus, the 350-residue chain is TLC domain-containing protein fld-1 (350 aa).

A helical membrane pass occupies residues 9–29 (TDLLGPVPTMFLWVIVSFAFF). A disordered region spans residues 65 to 100 (GQEAENTENPPENEAEAGEQVEQEPEPDSRDLSAIP). The segment covering 75–90 (PENEAEAGEQVEQEPE) has biased composition (acidic residues). The 178-residue stretch at 102–279 (NKKWRISNEC…IINGLVIASL (178 aa)) folds into the TLC domain. A run of 6 helical transmembrane segments spans residues 111–131 (CVSL…LLYY), 145–165 (VAIN…VDLL), 173–193 (IIEL…TMFF), 195–215 (RFLG…FLHS), 229–249 (PSFR…RLCV), and 270–292 (IING…RLLA).

In terms of tissue distribution, ubiquitously expressed.

Its subcellular location is the cell membrane. Functionally, regulates the composition and fluidity of the plasma membrane. Inhibits the incorporation of membrane-fluidizing phospholipids containing omega-3 long-chain polyunsaturated fatty acids (LCPUFA) and thereby promotes membrane rigidity. Does not appear to have any effect on LCPUFA synthesis. The sequence is that of TLC domain-containing protein fld-1 from Caenorhabditis elegans.